The sequence spans 666 residues: N-acetylgalactosaminyltransferase 6 (666 aa).

At 1-11 (MRRPNLKWIVK) the chain is on the cytoplasmic side. The chain crosses the membrane as a helical; Signal-anchor for type II membrane protein span at residues 12–31 (ASLLLLISLTLFVLITSWIS). At 32–666 (STPYTNKPVH…NYSQDLVLSL (635 aa)) the chain is on the lumenal side. The segment at 90-126 (EPVEEEVDNPHPADDEPQQQPQEELQMAAPADASVKK) is disordered. Low complexity predominate over residues 107–120 (QQQPQEELQMAAPA). The N-linked (GlcNAc...) asparagine glycan is linked to N181. 5 disulfides stabilise this stretch: C192–C421, C412–C491, C531–C548, C577–C594, and C621–C636. Residues 201–311 (LPTVSVIIIF…YNWLPPLLEP (111 aa)) form a catalytic subdomain A region. Substrate-binding residues include D242 and R272. N285 carries N-linked (GlcNAc...) asparagine glycosylation. D295 lines the Mn(2+) pocket. Position 296 (S296) interacts with substrate. H297 is a binding site for Mn(2+). A catalytic subdomain B region spans residues 367–429 (PFKSPIMAGG…PCSRIGHIYR (63 aa)). A substrate-binding site is contributed by W398. H426 contributes to the Mn(2+) binding site. R429 is a binding site for substrate. The Ricin B-type lectin domain occupies 518-648 (AMGALQNVGN…DNRFQQWNFG (131 aa)). N651 and N657 each carry an N-linked (GlcNAc...) asparagine glycan.

Belongs to the glycosyltransferase 2 family. GalNAc-T subfamily. The cofactor is Mn(2+). Expressed during oogenesis, in the somatically derived follicle cells that surround the developing oocyte, which are involved in the maturation of the oocyte and construction of the egg shell, as well as playing a role in subsequent embryonic pattern formation. Expressed in the salivary glands from embryonic stage 12 onwards, becoming stronger at stage 13. During embryonic stages 12-13, also expressed in the posterior midgut and hindgut. During embryonic stages 14-15, expression continues in the hindgut. Expression is detected in the epidermis and antennomaxillary complex during embryonic stages 16-17. In third instar larvae, ubiquitously expressed in wing, eye-antennal, leg and haltere imaginal disks.

It is found in the golgi apparatus membrane. It catalyses the reaction L-seryl-[protein] + UDP-N-acetyl-alpha-D-galactosamine = a 3-O-[N-acetyl-alpha-D-galactosaminyl]-L-seryl-[protein] + UDP + H(+). It carries out the reaction L-threonyl-[protein] + UDP-N-acetyl-alpha-D-galactosamine = a 3-O-[N-acetyl-alpha-D-galactosaminyl]-L-threonyl-[protein] + UDP + H(+). Its pathway is protein modification; protein glycosylation. In terms of biological role, glycopeptide transferase involved in O-linked oligosaccharide biosynthesis, which catalyzes the transfer of an N-acetyl-D-galactosamine residue to an already glycosylated peptide. In contrast to other proteins of the family, it does not act as a peptide transferase that transfers GalNAc onto serine or threonine residue on the protein receptor, but instead requires the prior addition of a GalNAc on a peptide before adding additional GalNAc moieties. Some peptide transferase activity is however not excluded, considering that its appropriate peptide substrate may remain unidentified. Prefers the diglycosylated Muc5AC-3/13 as substrate. Might have a role in protein O-glycosylation in the Golgi and thereby in establishing and/or maintaining a proper secretory apparatus structure. The chain is N-acetylgalactosaminyltransferase 6 from Drosophila melanogaster (Fruit fly).